A 335-amino-acid chain; its full sequence is Protein BRASSINAZOLE-RESISTANT 2 (335 aa).

Positions 1–19 (MTSDGATSTSAAAAAAAMA) are enriched in low complexity. Disordered regions lie at residues 1 to 40 (MTSD…RRRR), 85 to 122 (TYRK…FDSP), and 164 to 190 (PPLR…KPLP). The required for DNA-binding stretch occupies residues 22–103 (RKPSWREREN…PGDMAGSSSR (82 aa)). A compositionally biased stretch (polar residues) spans 99–120 (GSSSRATPYSSHNQSPLSSTFD). Phosphothreonine is present on T175. The PEST-like stretch occupies residues 231–251 (HAPATIPECDESDSSTVDSGH).

Belongs to the BZR/LAT61 family. Interacts with ASK7/BIN2 through its C-terminal domain and with the bHLH transcription factors BIM1, BIM2 and BIM3 through its C- and N-terminal domains. Interacts (via N-terminus) with REF6 and ELF6. Interacts with MYB30. Interacts with IWS1. Interacts with ASHH2/SDG8. Binds to MYB56 when dephosphorylated in the nucleus of quiescent center (QC) cells. Binds to WRKY46, WRKY54 and WRKY70 to cooperatively regulate the expression of target genes. Phosphorylated by ASK7/BIN2. Phosphorylation increases protein degradation and/or interferes with the nuclear localization. Ubiquitously expressed in cotyledons, leaves, hypocotyls and roots.

The protein resides in the nucleus. It localises to the cytoplasm. Functionally, positive regulator of brassinosteroid (BR) signaling. Transcription factor that activates target gene expression by binding specifically to the DNA sequence 5'-CANNTG-3'(E box) through its N-terminal domain. Can bind individually to the promoter as a homodimer or synergistically as a heterodimer with BIM1, BIM2 or BIM3. The C-terminal domain is probably involved in transcriptional activation. Recruits the transcription elongation factor IWS1 to control BR-regulated gene expression. Forms a trimeric complex with IWS1 and ASHH2/SDG8 to regulate BR-regulated gene expression. Promotes quiescent center (QC) self-renewal by cell divisions in the primary root. Binds to the E-boxes of the BRAVO promoter to repress its expression. This is Protein BRASSINAZOLE-RESISTANT 2 from Arabidopsis thaliana (Mouse-ear cress).